The following is an 874-amino-acid chain: Alanine--tRNA ligase (874 aa).

Residues His564, His568, Cys665, and His669 each contribute to the Zn(2+) site.

This sequence belongs to the class-II aminoacyl-tRNA synthetase family. Zn(2+) is required as a cofactor.

The protein localises to the cytoplasm. The enzyme catalyses tRNA(Ala) + L-alanine + ATP = L-alanyl-tRNA(Ala) + AMP + diphosphate. Catalyzes the attachment of alanine to tRNA(Ala) in a two-step reaction: alanine is first activated by ATP to form Ala-AMP and then transferred to the acceptor end of tRNA(Ala). Also edits incorrectly charged Ser-tRNA(Ala) and Gly-tRNA(Ala) via its editing domain. The chain is Alanine--tRNA ligase from Burkholderia mallei (strain ATCC 23344).